We begin with the raw amino-acid sequence, 533 residues long: Glucose-6-phosphate isomerase (533 aa).

The active-site Proton donor is glutamate 341. Catalysis depends on residues histidine 372 and lysine 501.

It belongs to the GPI family.

Its subcellular location is the cytoplasm. It carries out the reaction alpha-D-glucose 6-phosphate = beta-D-fructose 6-phosphate. The protein operates within carbohydrate biosynthesis; gluconeogenesis. It participates in carbohydrate degradation; glycolysis; D-glyceraldehyde 3-phosphate and glycerone phosphate from D-glucose: step 2/4. Catalyzes the reversible isomerization of glucose-6-phosphate to fructose-6-phosphate. This is Glucose-6-phosphate isomerase from Cereibacter sphaeroides (strain ATCC 17023 / DSM 158 / JCM 6121 / CCUG 31486 / LMG 2827 / NBRC 12203 / NCIMB 8253 / ATH 2.4.1.) (Rhodobacter sphaeroides).